A 552-amino-acid polypeptide reads, in one-letter code: Solute carrier family 22 member 6-B (552 aa).

Topologically, residues 1 to 16 are cytoplasmic; that stretch reads MAFQEILESLGGMGRY. Residues 17-37 form a helical membrane-spanning segment; that stretch reads QVIHVVLLSLPVFMLASHNLM. Residues 38–137 lie on the Extracellular side of the membrane; that stretch reads QNFTAATPSH…LVCNHRRMRQ (100 aa). The chain crosses the membrane as a helical span at residues 138–158; that stretch reads VAQSIYMAGVLVGSILFGGLS. Residues 159 to 164 lie on the Cytoplasmic side of the membrane; that stretch reads DKFGRR. A helical membrane pass occupies residues 165–184; sequence PLNIWSNLQMFVTGICAAFS. Position 185 (P185) is a topological domain, extracellular. A helical transmembrane segment spans residues 186-206; sequence NYIWYCIFRFLTGVAFSGIVL. Residues 207–225 are Cytoplasmic-facing; that stretch reads NSYSLTVEWIPTGNRAFTS. The chain crosses the membrane as a helical span at residues 226–246; that stretch reads TATGYCYTMGQLVLVGLAFII. Residues 247 to 250 are Extracellular-facing; that stretch reads RDWQ. Residues 251–271 form a helical membrane-spanning segment; that stretch reads WLQLAASIPFFFYFLYSWWIP. The Cytoplasmic segment spans residues 272–336; that stretch reads ESGRWLVLSG…YSALDLVRTP (65 aa). The helical transmembrane segment at 337–356 threads the bilayer; it reads VVRRISFCISCTWFSTSFAY. Residue Y357 is a topological domain, extracellular. The helical transmembrane segment at 358 to 378 threads the bilayer; sequence GLALDLQSFGVSIYIIQIIFG. Residues 379 to 398 lie on the Cytoplasmic side of the membrane; that stretch reads TVDIPAKFISYFITTYVGRR. Residues 399 to 419 traverse the membrane as a helical segment; that stretch reads VSQAITLILAGIAILVNISVP. At 420–426 the chain is on the extracellular side; that stretch reads QDFQTVR. Residues 427 to 447 form a helical membrane-spanning segment; that stretch reads TAMAVFGKGCLAASFNCLYLY. Residues 448 to 459 are Cytoplasmic-facing; sequence TGELYPTVIRQT. The helical transmembrane segment at 460–480 threads the bilayer; it reads GMGLGAMMARLGGIIAPLAQM. Residues 481–487 lie on the Extracellular side of the membrane; it reads TGDIYHS. The helical transmembrane segment at 488-508 threads the bilayer; that stretch reads LPLIIFGCLPILSGIAGCFLP. The Cytoplasmic segment spans residues 509 to 552; the sequence is ETLGVPLPETIEEVESPDKQQKDVNVSAKIPLKETELYNMKTDV.

It belongs to the major facilitator (TC 2.A.1) superfamily. Organic cation transporter (TC 2.A.1.19) family. Post-translationally, glycosylated. Glycosylation is necessary for proper targeting of the transporter to the plasma membrane.

It is found in the cell membrane. It localises to the basolateral cell membrane. The protein localises to the basal cell membrane. Functionally, involved in the renal elimination of endogenous and exogenous organic anions. Mediates the sodium-independent uptake of p-aminohippurate (PAH), cidofovir, adefovir, 9-(2-phosphonylmethoxyethyl) guanine (PMEG), 9-(2-phosphonylmethoxyethyl) diaminopurine (PMEDAP) and edaravone sulfate. PAH uptake is inhibited by furosemide, steviol, phorbol 12-myristate 13-acetate (PMA), calcium ionophore A23187, benzylpenicillin, furosemide, indomethacin, bumetamide, losartan, probenecid, phenol red, urate, and alpha-ketoglutarate. This chain is Solute carrier family 22 member 6-B (slc22a6-b), found in Xenopus laevis (African clawed frog).